A 169-amino-acid chain; its full sequence is Phosphopantetheine adenylyltransferase (169 aa).

Threonine 9 provides a ligand contact to substrate. Residues 9-10 (TF) and histidine 17 each bind ATP. Residues lysine 41, leucine 73, and arginine 87 each coordinate substrate. ATP-binding positions include 88 to 90 (GLR), glutamate 98, and 123 to 129 (YQFISGT).

This sequence belongs to the bacterial CoaD family. In terms of assembly, homohexamer. Requires Mg(2+) as cofactor.

The protein localises to the cytoplasm. The enzyme catalyses (R)-4'-phosphopantetheine + ATP + H(+) = 3'-dephospho-CoA + diphosphate. The protein operates within cofactor biosynthesis; coenzyme A biosynthesis; CoA from (R)-pantothenate: step 4/5. Reversibly transfers an adenylyl group from ATP to 4'-phosphopantetheine, yielding dephospho-CoA (dPCoA) and pyrophosphate. This is Phosphopantetheine adenylyltransferase from Bordetella bronchiseptica (strain ATCC BAA-588 / NCTC 13252 / RB50) (Alcaligenes bronchisepticus).